Here is a 265-residue protein sequence, read N- to C-terminus: 3-methyl-2-oxobutanoate hydroxymethyltransferase (265 aa).

Mg(2+)-binding residues include Asp44 and Asp83. Residues 44 to 45 (DS), Asp83, and Lys113 each bind 3-methyl-2-oxobutanoate. A Mg(2+)-binding site is contributed by Glu115. Residue Glu183 is the Proton acceptor of the active site.

Belongs to the PanB family. In terms of assembly, homodecamer; pentamer of dimers. The cofactor is Mg(2+).

The protein resides in the cytoplasm. The catalysed reaction is 3-methyl-2-oxobutanoate + (6R)-5,10-methylene-5,6,7,8-tetrahydrofolate + H2O = 2-dehydropantoate + (6S)-5,6,7,8-tetrahydrofolate. It functions in the pathway cofactor biosynthesis; (R)-pantothenate biosynthesis; (R)-pantoate from 3-methyl-2-oxobutanoate: step 1/2. Its function is as follows. Catalyzes the reversible reaction in which hydroxymethyl group from 5,10-methylenetetrahydrofolate is transferred onto alpha-ketoisovalerate to form ketopantoate. This is 3-methyl-2-oxobutanoate hydroxymethyltransferase from Leptospira borgpetersenii serovar Hardjo-bovis (strain JB197).